We begin with the raw amino-acid sequence, 153 residues long: 3-hydroxyacyl-[acyl-carrier-protein] dehydratase FabZ (153 aa).

The active site involves histidine 54.

Belongs to the thioester dehydratase family. FabZ subfamily.

It localises to the cytoplasm. It catalyses the reaction a (3R)-hydroxyacyl-[ACP] = a (2E)-enoyl-[ACP] + H2O. Involved in unsaturated fatty acids biosynthesis. Catalyzes the dehydration of short chain beta-hydroxyacyl-ACPs and long chain saturated and unsaturated beta-hydroxyacyl-ACPs. In Shewanella frigidimarina (strain NCIMB 400), this protein is 3-hydroxyacyl-[acyl-carrier-protein] dehydratase FabZ.